A 342-amino-acid chain; its full sequence is MENRMVTPFDVEDDKEQYSLRPTTLKEYIGQKKVKANLDIFIKAAKKRNESLDHVLFYGPPGLGKTTLANIIANEMTGNLKVTSGPAIEKAGDLAAILTSLTDYDVLFIDEIHRLNRSIEEILYPAMEDYALDIVIGKGAAAKSIRLDLPKFTLIGATTRVGLLTSPLRDRFGMLCAMEFYTDEELMEIVVRSAAILNVNICREAAFEIGKRSRGTPRIANRLLKRVRDYCDVKHDGDIDLQGAKAALDLLEVDKEGLDKIDNKILEAIIFNFKGGPVGLETLAYFIGEELDTIEDVYEPYLIQKGFIMRTPRGRVASEKAYNHFGVTKKEEKDNQVSIFNK.

A large ATPase domain (RuvB-L) region spans residues M1–Y181. ATP is bound by residues L20, R21, G62, K65, T66, T67, E128–Y130, R171, Y181, and R218. Residue T66 coordinates Mg(2+). The interval T182 to E252 is small ATPAse domain (RuvB-S). The segment at K255 to K342 is head domain (RuvB-H). Residues R310 and R315 each contribute to the DNA site.

The protein belongs to the RuvB family. In terms of assembly, homohexamer. Forms an RuvA(8)-RuvB(12)-Holliday junction (HJ) complex. HJ DNA is sandwiched between 2 RuvA tetramers; dsDNA enters through RuvA and exits via RuvB. An RuvB hexamer assembles on each DNA strand where it exits the tetramer. Each RuvB hexamer is contacted by two RuvA subunits (via domain III) on 2 adjacent RuvB subunits; this complex drives branch migration. In the full resolvosome a probable DNA-RuvA(4)-RuvB(12)-RuvC(2) complex forms which resolves the HJ.

The protein localises to the cytoplasm. The catalysed reaction is ATP + H2O = ADP + phosphate + H(+). Functionally, the RuvA-RuvB-RuvC complex processes Holliday junction (HJ) DNA during genetic recombination and DNA repair, while the RuvA-RuvB complex plays an important role in the rescue of blocked DNA replication forks via replication fork reversal (RFR). RuvA specifically binds to HJ cruciform DNA, conferring on it an open structure. The RuvB hexamer acts as an ATP-dependent pump, pulling dsDNA into and through the RuvAB complex. RuvB forms 2 homohexamers on either side of HJ DNA bound by 1 or 2 RuvA tetramers; 4 subunits per hexamer contact DNA at a time. Coordinated motions by a converter formed by DNA-disengaged RuvB subunits stimulates ATP hydrolysis and nucleotide exchange. Immobilization of the converter enables RuvB to convert the ATP-contained energy into a lever motion, pulling 2 nucleotides of DNA out of the RuvA tetramer per ATP hydrolyzed, thus driving DNA branch migration. The RuvB motors rotate together with the DNA substrate, which together with the progressing nucleotide cycle form the mechanistic basis for DNA recombination by continuous HJ branch migration. Branch migration allows RuvC to scan DNA until it finds its consensus sequence, where it cleaves and resolves cruciform DNA. The sequence is that of Holliday junction branch migration complex subunit RuvB from Clostridium botulinum (strain Loch Maree / Type A3).